The following is a 350-amino-acid chain: tRNA-splicing endonuclease (350 aa).

Residues Tyr-286, His-297, and Lys-328 contribute to the active site.

Belongs to the tRNA-intron endonuclease family. Archaeal long subfamily. In terms of assembly, homodimer.

The catalysed reaction is pretRNA = a 3'-half-tRNA molecule with a 5'-OH end + a 5'-half-tRNA molecule with a 2',3'-cyclic phosphate end + an intron with a 2',3'-cyclic phosphate and a 5'-hydroxyl terminus.. In terms of biological role, endonuclease that removes tRNA introns. Cleaves pre-tRNA at the 5'- and 3'-splice sites to release the intron. The products are an intron and two tRNA half-molecules bearing 2',3' cyclic phosphate and 5'-OH termini. Recognizes a pseudosymmetric substrate in which 2 bulged loops of 3 bases are separated by a stem of 4 bp. This Methanosarcina acetivorans (strain ATCC 35395 / DSM 2834 / JCM 12185 / C2A) protein is tRNA-splicing endonuclease.